We begin with the raw amino-acid sequence, 312 residues long: Putative tricarboxylate transport protein, mitochondrial (312 aa).

Solcar repeat units follow at residues 23–111 (EKTV…LKSQ), 122–208 (VMRL…LKDW), and 218–303 (ISKP…IIEF). Helical transmembrane passes span 29–49 (IVIGGITGGIEICITFPTEYV), 75–95 (VNGHGFFGLYRGLSVLLYGSI), 126–146 (LCGLGAGLSEAVFAVTPMETV), 164–184 (FVHGVGCIVKAEGLGGIYKGV), 221–241 (PIVGLMGAVAGAASVYGNTPI), and 286–306 (VCLDVGITFMIYDSIIEFLDV).

This sequence belongs to the mitochondrial carrier (TC 2.A.29) family.

Its subcellular location is the mitochondrion inner membrane. In terms of biological role, transport of citrate across inner mitochondrial membrane. The chain is Putative tricarboxylate transport protein, mitochondrial from Caenorhabditis elegans.